The primary structure comprises 620 residues: Long-chain fatty acid transport protein 2 (620 aa).

Residues 1 to 4 lie on the Lumenal side of the membrane; the sequence is MLPV. The helical transmembrane segment at 5-27 threads the bilayer; that stretch reads LYTGLAGLLLLPLLLTCCCPYLL. Over 28-106 the chain is Cytoplasmic; sequence QDVRFFLQLA…DHLGLRQGDC (79 aa). A helical transmembrane segment spans residues 107–127; the sequence is VALFMGNEPAYVWLWLGLLKL. Residues 128–267 lie on the Lumenal side of the membrane; the sequence is GCPMACLNYN…DVIYTTMPLY (140 aa). 222-233 contacts AMP; sequence YIYTSGTTGLPK. The helical transmembrane segment at 268-288 threads the bilayer; the sequence is HSAALMIGLHGCIVVGATFAL. Residues 289 to 620 lie on the Cytoplasmic side of the membrane; it reads RSKFSASQFW…NAIIDKTLKL (332 aa). The residue at position 291 (Lys291) is an N6-acetyllysine. Thr577 carries the phosphothreonine modification.

It belongs to the ATP-dependent AMP-binding enzyme family. In terms of tissue distribution, liver and kidney (at protein level).

Its subcellular location is the endoplasmic reticulum membrane. It localises to the peroxisome membrane. The protein localises to the cell membrane. It is found in the microsome. The catalysed reaction is a fatty acid(in) = a fatty acid(out). It catalyses the reaction (9Z)-octadecenoate(out) = (9Z)-octadecenoate(in). It carries out the reaction a long-chain fatty acid + ATP + CoA = a long-chain fatty acyl-CoA + AMP + diphosphate. The enzyme catalyses (5Z,8Z,11Z,14Z)-eicosatetraenoate + ATP + CoA = (5Z,8Z,11Z,14Z)-eicosatetraenoyl-CoA + AMP + diphosphate. The catalysed reaction is (9Z,12Z,15Z)-octadecatrienoate + ATP + CoA = (9Z,12Z,15Z)-octadecatrienoyl-CoA + AMP + diphosphate. It catalyses the reaction hexadecanoate + ATP + CoA = hexadecanoyl-CoA + AMP + diphosphate. It carries out the reaction (9Z)-octadecenoate + ATP + CoA = (9Z)-octadecenoyl-CoA + AMP + diphosphate. The enzyme catalyses 2,6,10,14-tetramethylpentadecanoate + ATP + CoA = pristanoyl-CoA + AMP + diphosphate. The catalysed reaction is (E)-hexadec-2-enoate + ATP + CoA = (2E)-hexadecenoyl-CoA + AMP + diphosphate. It catalyses the reaction 3,7,11,15-tetramethylhexadecanoate + ATP + CoA = phytanoyl-CoA + AMP + diphosphate. It carries out the reaction a very long-chain fatty acid + ATP + CoA = a very long-chain fatty acyl-CoA + AMP + diphosphate. The enzyme catalyses tetracosanoate + ATP + CoA = tetracosanoyl-CoA + AMP + diphosphate. The catalysed reaction is (4Z,7Z,10Z,13Z,16Z,19Z)-docosahexaenoate + ATP + CoA = (4Z,7Z,10Z,13Z,16Z,19Z)-docosahexaenoyl-CoA + AMP + diphosphate. It catalyses the reaction (25R)-3alpha,7alpha,12alpha-trihydroxy-5beta-cholestan-26-oate + ATP + CoA = (25R)-3alpha,7alpha,12alpha-trihydroxy-5beta-cholestan-26-oyl-CoA + AMP + diphosphate. In terms of biological role, mediates the import of long-chain fatty acids (LCFA) into the cell by facilitating their transport across cell membranes, playing an important role in hepatic fatty acid uptake. Also functions as an acyl-CoA ligase catalyzing the ATP-dependent formation of fatty acyl-CoA using LCFA and very-long-chain fatty acids (VLCFA) as substrates, which prevents fatty acid efflux from cells and might drive more fatty acid uptake. Plays a pivotal role in regulating available LCFA substrates from exogenous sources in tissues undergoing high levels of beta-oxidation or triglyceride synthesis. Can also activate branched-chain fatty acids such as phytanic acid and pristanic acid. May contribute to the synthesis of sphingosine-1-phosphate. Does not activate C24 bile acids, cholate and chenodeoxycholate. In vitro, activates 3-alpha,7-alpha,12-alpha-trihydroxy-5-beta-cholestanate (THCA), the C27 precursor of cholic acid deriving from the de novo synthesis from cholesterol. However, it is not critical for THCA activation and bile synthesis in vivo. The chain is Long-chain fatty acid transport protein 2 (Slc27a2) from Rattus norvegicus (Rat).